The chain runs to 275 residues: Adaptin ear-binding coat-associated protein 1 (275 aa).

A disordered region spans residues 166 to 190 (ITTKKGGTSKPKTAGTGGLSLLPPP). A compositionally biased stretch (low complexity) spans 167–179 (TTKKGGTSKPKTA). Thr211 is subject to Phosphothreonine. The disordered stretch occupies residues 215-275 (IPKSNHGGSD…APQPSNWVQF (61 aa)). 2 short sequence motifs (WXXF motif) span residues 252–255 (WGDF) and 272–275 (WVQF). The segment covering 256 to 275 (STASSSVPNQAPQPSNWVQF) has biased composition (polar residues).

Belongs to the NECAP family. As to quaternary structure, interacts with AP1G1 and AP2A1 components of the adapter protein complexes AP-1 and AP-2. Interacts with the GAE domain proteins GGA1, GGA2 and GGA3.

Its subcellular location is the cytoplasmic vesicle. It is found in the clathrin-coated vesicle membrane. It localises to the cell membrane. In terms of biological role, involved in endocytosis. This chain is Adaptin ear-binding coat-associated protein 1 (NECAP1), found in Bos taurus (Bovine).